The sequence spans 100 residues: Urease subunit gamma (100 aa).

This sequence belongs to the urease gamma subunit family. As to quaternary structure, heterotrimer of UreA (gamma), UreB (beta) and UreC (alpha) subunits. Three heterotrimers associate to form the active enzyme.

The protein localises to the cytoplasm. It catalyses the reaction urea + 2 H2O + H(+) = hydrogencarbonate + 2 NH4(+). Its pathway is nitrogen metabolism; urea degradation; CO(2) and NH(3) from urea (urease route): step 1/1. The sequence is that of Urease subunit gamma from Rhodopseudomonas palustris (strain BisB5).